Reading from the N-terminus, the 217-residue chain is Zinc finger CCHC-type and RNA-binding motif-containing protein 1 (217 aa).

The RRM domain maps to 10–88 (STVYVSNLPF…RVIKASIAID (79 aa)). A CCHC-type zinc finger spans residues 105 to 122 (SKCYECGESGHLSYACPK). The segment at 120–217 (CPKNMLGERE…YFSDEEELSD (98 aa)) is disordered. The span at 145 to 163 (PEEEIEEVEESEDEGEDPA) shows a compositional bias: acidic residues. 3 positions are modified to phosphoserine: Ser-155, Ser-210, and Ser-216.

Component of the U11/U12 snRNPs that are part of the U12-type spliceosome.

Its subcellular location is the nucleus. The protein localises to the nucleoplasm. The polypeptide is Zinc finger CCHC-type and RNA-binding motif-containing protein 1 (ZCRB1) (Homo sapiens (Human)).